A 489-amino-acid chain; its full sequence is Adenylosuccinate synthetase 2, chloroplastic (489 aa).

The transit peptide at 1-54 (MPLASLSLDPAPFPLIRPAAGWSGRVLPVPGPAPRLCRPLRAAPVAPATTDEPS) directs the protein to the chloroplast. Residues 76-82 (GDEGKGK) and 104-106 (GHT) each bind GTP. Aspartate 77 functions as the Proton acceptor in the catalytic mechanism. The Mg(2+) site is built by aspartate 77 and glycine 104. IMP-binding positions include 77 to 80 (DEGK), 102 to 105 (NAGH), threonine 194, arginine 208, glutamine 288, threonine 303, and arginine 367. Histidine 105 acts as the Proton donor in catalysis. 363–369 (TTTGRPR) contacts substrate. GTP is bound by residues arginine 369, 395–397 (KLD), and 478–480 (GVG).

It belongs to the adenylosuccinate synthetase family. Homodimer. The cofactor is Mg(2+).

It is found in the plastid. Its subcellular location is the chloroplast. The enzyme catalyses IMP + L-aspartate + GTP = N(6)-(1,2-dicarboxyethyl)-AMP + GDP + phosphate + 2 H(+). It functions in the pathway purine metabolism; AMP biosynthesis via de novo pathway; AMP from IMP: step 1/2. In terms of biological role, plays an important role in the de novo pathway and in the salvage pathway of purine nucleotide biosynthesis. Catalyzes the first committed step in the biosynthesis of AMP from IMP. This is Adenylosuccinate synthetase 2, chloroplastic from Sorghum bicolor (Sorghum).